The sequence spans 157 residues: Probable Brix domain-containing ribosomal biogenesis protein (157 aa).

The Brix domain maps to M1–Y157.

Probably involved in the biogenesis of the ribosome. This is Probable Brix domain-containing ribosomal biogenesis protein from Methanosarcina barkeri (strain Fusaro / DSM 804).